Reading from the N-terminus, the 214-residue chain is Nicotinamidase (214 aa).

The active-site Proton acceptor is Asp18. Residues Asp56, His58, His62, and His91 each coordinate a divalent metal cation. Lys116 is an active-site residue. Residue Cys161 is the Nucleophile of the active site.

This sequence belongs to the isochorismatase family. It depends on a divalent metal cation as a cofactor.

It carries out the reaction nicotinamide + H2O = nicotinate + NH4(+). It functions in the pathway cofactor biosynthesis; nicotinate biosynthesis; nicotinate from nicotinamide: step 1/1. Functionally, catalyzes the deamidation of nicotinamide (NAM) into nicotinate (Na). Functions in the deamidating salvage pathway for production of NAD from nicotinamide. In Acinetobacter baylyi (strain ATCC 33305 / BD413 / ADP1), this protein is Nicotinamidase.